A 215-amino-acid chain; its full sequence is Redox-sensing transcriptional repressor Rex (215 aa).

Residues 18 to 57 constitute a DNA-binding region (H-T-H motif); that stretch reads LYYRFLKNLHASGKQRVSSAELSEAVKVDPATIRRDFSYF. 92 to 97 is a binding site for NAD(+); the sequence is GVGNLG.

It belongs to the transcriptional regulatory Rex family. As to quaternary structure, homodimer.

It is found in the cytoplasm. Its function is as follows. Modulates transcription in response to changes in cellular NADH/NAD(+) redox state. This chain is Redox-sensing transcriptional repressor Rex, found in Geobacillus sp. (strain WCH70).